The following is a 348-amino-acid chain: Heat-inducible transcription repressor HrcA (348 aa).

Belongs to the HrcA family.

In terms of biological role, negative regulator of class I heat shock genes (grpE-dnaK-dnaJ and groELS operons). Prevents heat-shock induction of these operons. The sequence is that of Heat-inducible transcription repressor HrcA from Pelotomaculum thermopropionicum (strain DSM 13744 / JCM 10971 / SI).